A 582-amino-acid chain; its full sequence is Phosphoglucomutase, cytoplasmic (582 aa).

Residues Arg-25 and Ser-124 each contribute to the alpha-D-glucose 1,6-bisphosphate site. Ser-124 (phosphoserine intermediate) is an active-site residue. The Mg(2+) site is built by Ser-124, Asp-300, Asp-302, and Asp-304. Phosphoserine is present on Ser-124. Residues Asp-304, Arg-305, Thr-368, Glu-387, Ser-389, and Lys-400 each contribute to the alpha-D-glucose 1,6-bisphosphate site.

It belongs to the phosphohexose mutase family. As to quaternary structure, monomer. Mg(2+) serves as cofactor.

The protein resides in the cytoplasm. The enzyme catalyses alpha-D-glucose 1-phosphate = alpha-D-glucose 6-phosphate. It carries out the reaction O-phospho-L-seryl-[protein] + alpha-D-glucose 1-phosphate = alpha-D-glucose 1,6-bisphosphate + L-seryl-[protein]. The catalysed reaction is alpha-D-glucose 1,6-bisphosphate + L-seryl-[protein] = O-phospho-L-seryl-[protein] + alpha-D-glucose 6-phosphate. In terms of biological role, catalyzes the reversible isomerization of alpha-D-glucose 1-phosphate to alpha-D-glucose 6-phosphate. The mechanism proceeds via the intermediate compound alpha-D-glucose 1,6-bisphosphate. This enzyme participates in both the breakdown and synthesis of glucose. This is Phosphoglucomutase, cytoplasmic (PGM1) from Pisum sativum (Garden pea).